Reading from the N-terminus, the 280-residue chain is L-proline cis-4-hydroxylase (280 aa).

The Fe cation site is built by H106, D108, and H154. R164 is a binding site for 2-oxoglutarate.

This sequence belongs to the L-proline cis-4-/cis-3-hydroxylase family. Fe(2+) is required as a cofactor.

It catalyses the reaction L-proline + 2-oxoglutarate + O2 = cis-4-hydroxy-L-proline + succinate + CO2. Inhibited by metal ions such as Co(2+), Zn(2+), Cu(2+) or Ni(2+). Is also inhibited by EDTA or diethylpyrocarbonate (DEPC) in vitro. Unlike the procollagen-proline cis-3- and trans-4-hydroxylases from mammals, does not necessarily require L-ascorbate for activity although it does increase the activity of the enzyme. Functionally, dioxygenase that catalyzes the 2-oxoglutarate-dependent selective hydroxylation of free L-proline to cis-4-hydroxy-L-proline (cis-4-Hyp). The chain is L-proline cis-4-hydroxylase from Rhizobium meliloti (strain 1021) (Ensifer meliloti).